A 381-amino-acid polypeptide reads, in one-letter code: Putative MgpC-like protein MPN_503 (381 aa).

The interval Met-1–Ser-109 is disordered. The span at Glu-13–Pro-31 shows a compositional bias: polar residues. Composition is skewed to basic and acidic residues over residues Lys-40–Asn-51 and Asp-61–Gly-73. Over residues Val-89 to Ser-109 the composition is skewed to polar residues.

The protein belongs to the MgpC family.

This chain is Putative MgpC-like protein MPN_503, found in Mycoplasma pneumoniae (strain ATCC 29342 / M129 / Subtype 1) (Mycoplasmoides pneumoniae).